The chain runs to 250 residues: Uracil-DNA glycosylase (250 aa).

The active-site Proton acceptor is the Asp78. The segment at 228-250 (RGQKPVDWSGEQNNASRQGEFAL) is disordered.

It belongs to the uracil-DNA glycosylase (UDG) superfamily. UNG family.

The protein resides in the cytoplasm. It catalyses the reaction Hydrolyzes single-stranded DNA or mismatched double-stranded DNA and polynucleotides, releasing free uracil.. Its function is as follows. Excises uracil residues from the DNA which can arise as a result of misincorporation of dUMP residues by DNA polymerase or due to deamination of cytosine. This chain is Uracil-DNA glycosylase, found in Bordetella pertussis (strain Tohama I / ATCC BAA-589 / NCTC 13251).